The following is an 878-amino-acid chain: MKKLTSAEVRRMFLQFFQEKGHAVEPSASLIPVDDPSLLWINSGVATLKKYFDGRIIPDNPRICNAQKSIRTNDIENVGKTARHHTFFEMLGNFSIGDYFKREAIHWAWEFLTSEKWIGFDPERLSVTVHPEDEEAYNIWRNEIGLPEERIIRLEGKFWDIGEGPSGPNTEIFYDRGEAFGNDPNDPELYPGGENDRYLEVWNLVFSQFNHNPDGTYTPLPKKNIDTGMGLERMCSILQDVPTNFETDLFMPIIRATEQIAGEQYGKDPNKDVAFKVIADHIRAVTFAVGDGALPSNEGRGYVLRRLLRRAVRYAKQIGIDRPFMYELVPVVGEIMQDYYPEVKEKADFIARVIRTEEERFHETLHEGLAILAEVMEKAKKQGSTVIPGEEAFRLYDTYGFPLELTEEYAAEAGMSVDHAGFEREMERQRERARAARQDVDSMQVQGGVLGDIKDESRFVGYDELVVSSTVIAIIKDGQPVEEVGTGEEAQIIVDVTPFYAESGGQIADQGVFEGETGTAVVKDVQKAPNGQHLHSIVVERGAVKKGDRYTARVDEVKRSQIVKNHTATHLLHQALKDVLGRHVNQAGSLVAPDRLRFDFTHFGQVKPDELERIEAIVNEQIWKSIPVDIFYKPLEEAKAMGAMALFGEKYGDIVRVVKVGDYSLELCGGCHVPNTAAIGLFKIVSESGIGAGTRRIEAVTGEAAYRFMSEQLALLQEAAQKLKTSPRELNARLDGLFAELRQLQRENESLAARLAHMEAEHLTRQVKEVGGVPVLAAKVQANDMNQLRAMADDLKQKLGTAVIVLAAVQGGKVQLIAAVTDDLVKKGYHAGKLVKEVASRCGGGGGGRPDMAQAGGKDANKVGEALDYVETWVKSIS.

Positions 566, 570, 668, and 672 each coordinate Zn(2+).

Belongs to the class-II aminoacyl-tRNA synthetase family. Zn(2+) is required as a cofactor.

It is found in the cytoplasm. It catalyses the reaction tRNA(Ala) + L-alanine + ATP = L-alanyl-tRNA(Ala) + AMP + diphosphate. Its function is as follows. Catalyzes the attachment of alanine to tRNA(Ala) in a two-step reaction: alanine is first activated by ATP to form Ala-AMP and then transferred to the acceptor end of tRNA(Ala). Also edits incorrectly charged Ser-tRNA(Ala) and Gly-tRNA(Ala) via its editing domain. The chain is Alanine--tRNA ligase from Geobacillus thermodenitrificans (strain NG80-2).